The primary structure comprises 308 residues: Protein translocase subunit SecF (308 aa).

Helical transmembrane passes span 14-34, 134-154, 158-178, 185-205, 238-258, and 267-287; these read FFLL…LFGF, VYAV…RFEF, ISGI…FALL, TFVA…IVIF, SIRT…FGGI, and LIIG…PIWV.

The protein belongs to the SecD/SecF family. SecF subfamily. As to quaternary structure, forms a complex with SecD. Part of the essential Sec protein translocation apparatus which comprises SecA, SecYEG and auxiliary proteins SecDF. Other proteins may also be involved.

Its subcellular location is the cell membrane. Its function is as follows. Part of the Sec protein translocase complex. Interacts with the SecYEG preprotein conducting channel. SecDF uses the proton motive force (PMF) to complete protein translocation after the ATP-dependent function of SecA. The chain is Protein translocase subunit SecF from Alicyclobacillus acidocaldarius subsp. acidocaldarius (strain ATCC 27009 / DSM 446 / BCRC 14685 / JCM 5260 / KCTC 1825 / NBRC 15652 / NCIMB 11725 / NRRL B-14509 / 104-IA) (Bacillus acidocaldarius).